The following is a 329-amino-acid chain: Solute carrier family 35 member B1 (329 aa).

8 helical membrane-spanning segments follow: residues 21–41, 60–80, 91–111, 142–162, 175–195, 220–240, 250–270, and 292–312; these read AVCFCGVFVCYFYYGILQETI, TLVFIQCIINAAFARLLIQFF, WLYGLCSLSYLGAMVSSNSAL, YPMAKYLCVFLIVGGVALFLY, VFGFGEMLLLLSLTLDGLTGV, TLVLGIAVLWSGEVWEFLAFT, ILLFGITSALGQTFIFMTVVY, and VLLFGNVISHMQWFGTILVFL. The short motif at 325–329 is the Di-lysine motif element; the sequence is KKTTH.

It belongs to the nucleotide-sugar transporter family. SLC35B subfamily.

Its subcellular location is the endoplasmic reticulum membrane. Functionally, probable sugar transporter. In Danio rerio (Zebrafish), this protein is Solute carrier family 35 member B1 (slc35b1).